We begin with the raw amino-acid sequence, 304 residues long: Homoserine kinase (304 aa).

An ATP-binding site is contributed by 91-101 (PLGKGMGSSAA).

It belongs to the GHMP kinase family. Homoserine kinase subfamily.

Its subcellular location is the cytoplasm. The enzyme catalyses L-homoserine + ATP = O-phospho-L-homoserine + ADP + H(+). It participates in amino-acid biosynthesis; L-threonine biosynthesis; L-threonine from L-aspartate: step 4/5. In terms of biological role, catalyzes the ATP-dependent phosphorylation of L-homoserine to L-homoserine phosphate. This is Homoserine kinase from Solibacter usitatus (strain Ellin6076).